A 248-amino-acid polypeptide reads, in one-letter code: Adenosylcobinamide-GDP ribazoletransferase (248 aa).

The next 7 membrane-spanning stretches (helical) occupy residues 24–44 (EINLKKGSALLPFVGVIIGAW), 70–90 (IIITGGFHVDALADTADGLFS), 106–126 (VGANGVIAICFYFLFYGSLFL), 134–154 (IGWLFFVLPIVAKGVTMLLFA), 168–188 (IFLGVPWWPVVIAQVIVLVAL), 189–209 (GAFFSYIGVIAYAGVILFTII), and 228–248 (AGGQMGQLICLFCLVLLWGLI).

The protein belongs to the CobS family. It depends on Mg(2+) as a cofactor.

The protein localises to the cell membrane. It carries out the reaction alpha-ribazole + adenosylcob(III)inamide-GDP = adenosylcob(III)alamin + GMP + H(+). It catalyses the reaction alpha-ribazole 5'-phosphate + adenosylcob(III)inamide-GDP = adenosylcob(III)alamin 5'-phosphate + GMP + H(+). The protein operates within cofactor biosynthesis; adenosylcobalamin biosynthesis; adenosylcobalamin from cob(II)yrinate a,c-diamide: step 7/7. Functionally, joins adenosylcobinamide-GDP and alpha-ribazole to generate adenosylcobalamin (Ado-cobalamin). Also synthesizes adenosylcobalamin 5'-phosphate from adenosylcobinamide-GDP and alpha-ribazole 5'-phosphate. In Listeria monocytogenes serotype 4b (strain F2365), this protein is Adenosylcobinamide-GDP ribazoletransferase.